The primary structure comprises 343 residues: L-lysine cyclodeaminase (343 aa).

This sequence belongs to the ornithine cyclodeaminase/mu-crystallin family. It depends on NAD(+) as a cofactor.

It carries out the reaction L-lysine = L-pipecolate + NH4(+). It functions in the pathway antibiotic biosynthesis. With respect to regulation, inhibited by nipecotic acid and thiazolidine-2-carboxylic acid. Converts L-lysine to L-pipecolate, which is incorporated into multiple secondary metabolite products, including rapamycin, tobulysin, virginiamycin and pristinamycin. The polypeptide is L-lysine cyclodeaminase (rapL) (Streptomyces rapamycinicus (strain ATCC 29253 / DSM 41530 / NRRL 5491 / AYB-994) (Streptomyces hygroscopicus (strain ATCC 29253))).